A 184-amino-acid polypeptide reads, in one-letter code: Ribosome-recycling factor (184 aa).

Belongs to the RRF family.

The protein localises to the cytoplasm. Responsible for the release of ribosomes from messenger RNA at the termination of protein biosynthesis. May increase the efficiency of translation by recycling ribosomes from one round of translation to another. The polypeptide is Ribosome-recycling factor (Clostridium botulinum (strain Loch Maree / Type A3)).